Here is a 263-residue protein sequence, read N- to C-terminus: Endonuclease 8 (263 aa).

Residue Pro-2 is the Schiff-base intermediate with DNA of the active site. Glu-3 (proton donor) is an active-site residue. The active-site Proton donor; for beta-elimination activity is the Lys-53. 3 residues coordinate DNA: Gln-70, Arg-125, and Asn-169. The FPG-type zinc-finger motif lies at 229-263 (KVFHRDGEPCERCGSIIEKTTLSSRPFYWCPGCQH). The active-site Proton donor; for delta-elimination activity is Arg-253.

It belongs to the FPG family. Zn(2+) is required as a cofactor.

It catalyses the reaction 2'-deoxyribonucleotide-(2'-deoxyribose 5'-phosphate)-2'-deoxyribonucleotide-DNA = a 3'-end 2'-deoxyribonucleotide-(2,3-dehydro-2,3-deoxyribose 5'-phosphate)-DNA + a 5'-end 5'-phospho-2'-deoxyribonucleoside-DNA + H(+). In terms of biological role, involved in base excision repair of DNA damaged by oxidation or by mutagenic agents. Acts as a DNA glycosylase that recognizes and removes damaged bases. Has a preference for oxidized pyrimidines, such as thymine glycol, 5,6-dihydrouracil and 5,6-dihydrothymine. Has AP (apurinic/apyrimidinic) lyase activity and introduces nicks in the DNA strand. Cleaves the DNA backbone by beta-delta elimination to generate a single-strand break at the site of the removed base with both 3'- and 5'-phosphates. The polypeptide is Endonuclease 8 (Shigella sonnei (strain Ss046)).